Consider the following 384-residue polypeptide: Bacterial ceramide synthase (384 aa).

Its subcellular location is the cytoplasm. It carries out the reaction 3-oxosphinganine + a fatty acyl-CoA = N-acyl-3-oxosphinganine + CoA + H(+). The catalysed reaction is 3-oxosphinganine + tetradecanoyl-CoA = N-tetradecanoyl-3-oxosphinganine + CoA + H(+). It catalyses the reaction 3-oxosphinganine + hexadecanoyl-CoA = N-hexadecanoyl-3-oxosphinganine + CoA + H(+). The enzyme catalyses 3-oxosphinganine + (9Z)-hexadecenoyl-CoA = N-(9Z-hexadecenoyl)-3-oxosphinganine + CoA + H(+). It carries out the reaction 3-oxosphinganine + octanoyl-CoA = N-octanoyl-3-oxosphinganine + CoA + H(+). The catalysed reaction is 3-oxosphinganine + decanoyl-CoA = N-decanoyl-3-oxosphinganine + CoA + H(+). It catalyses the reaction 3-oxosphinganine + dodecanoyl-CoA = N-dodecanoyl-3-oxosphinganine + CoA + H(+). The enzyme catalyses 3-oxosphinganine + octadecanoyl-CoA = N-octadecanoyl-3-oxosphinganine + CoA + H(+). It carries out the reaction 3-oxosphinganine + eicosanoyl-CoA = N-eicosanoyl-3-oxosphinganine + CoA + H(+). The catalysed reaction is 3-oxosphinganine + docosanoyl-CoA = N-docosanoyl-3-ketodihydrosphingosine + CoA + H(+). It catalyses the reaction 3-oxosphinganine + tetracosanoyl-CoA = N-tetracosanoyl-3-oxosphinganine + CoA + H(+). The protein operates within lipid metabolism; sphingolipid metabolism. In terms of biological role, involved in de novo bacterial ceramide synthesis. Catalyzes the condensation of 3-oxosphinganine with an acyl-CoA to generate oxidized ceramides. Can use acyl-CoA substrates ranging from C8 to C24, with highest in vitro activity with C14 and very little activity with acyl-CoA thioesters of 18 carbons or longer. May have a preference for monounsaturated acyl-CoA substrates, as it has a threefold greater preference for C16:1-CoA over C16:0-CoA as a substrate in vitro. This is Bacterial ceramide synthase from Caulobacter vibrioides (strain NA1000 / CB15N) (Caulobacter crescentus).